A 429-amino-acid polypeptide reads, in one-letter code: Gamma-glutamyl phosphate reductase (429 aa).

It belongs to the gamma-glutamyl phosphate reductase family.

It localises to the cytoplasm. The enzyme catalyses L-glutamate 5-semialdehyde + phosphate + NADP(+) = L-glutamyl 5-phosphate + NADPH + H(+). It functions in the pathway amino-acid biosynthesis; L-proline biosynthesis; L-glutamate 5-semialdehyde from L-glutamate: step 2/2. Its function is as follows. Catalyzes the NADPH-dependent reduction of L-glutamate 5-phosphate into L-glutamate 5-semialdehyde and phosphate. The product spontaneously undergoes cyclization to form 1-pyrroline-5-carboxylate. The sequence is that of Gamma-glutamyl phosphate reductase from Nocardioides sp. (strain ATCC BAA-499 / JS614).